A 442-amino-acid chain; its full sequence is Cell division protein FtsA (442 aa).

This sequence belongs to the FtsA/MreB family. Self-interacts. Interacts with FtsZ.

The protein resides in the cell inner membrane. Functionally, cell division protein that is involved in the assembly of the Z ring. May serve as a membrane anchor for the Z ring. This is Cell division protein FtsA from Rhizobium meliloti (strain 1021) (Ensifer meliloti).